A 286-amino-acid chain; its full sequence is MRLAALTTLCALLGACAAPAPPAAAPRPVAPGQPAAGKAEVLWLGQAATRITTPGGKVIVIDPWLTSNPKTPPGFRQLPALGKVDLILVTHAHNDHLGDTPALARLTNAPVYNGGGLGRALVSLGLVPEAQVQRFGKSGTVMPFGPSGPKITAVHAEHSSELSLKNPATGKDETHFGGEPVGYIIELENGFRIWHMGDTGLFGDMRMIGEIYKPDLVLIPIGGYSTMGPQEAAIAVRDLIRPRFAIPIHYQTSPQASGTPEEFKAALGANAAAGVIVPQPGEKVDF.

Belongs to the UPF0173 family.

The chain is UPF0173 metal-dependent hydrolase RALTA_A1748 from Cupriavidus taiwanensis (strain DSM 17343 / BCRC 17206 / CCUG 44338 / CIP 107171 / LMG 19424 / R1) (Ralstonia taiwanensis (strain LMG 19424)).